The primary structure comprises 1701 residues: Coiled-coil domain-containing protein 180 (1701 aa).

Positions Met1–Pro35 are disordered. A coiled-coil region spans residues Gln171–Glu198. 3 disordered regions span residues Glu657 to Glu808, His1272 to Arg1291, and Gly1319 to Lys1354. Residues Gln661 to Gln671 show a composition bias toward basic residues. Basic and acidic residues predominate over residues Gly672 to Glu682. The span at Ser683 to Arg692 shows a compositional bias: polar residues. Over residues Glu696–Met705 the composition is skewed to acidic residues. Residues Glu755–Glu766 are compositionally biased toward basic and acidic residues. The stretch at Val757 to Glu804 forms a coiled coil. Residues Ser767 to Glu808 show a composition bias toward acidic residues.

The protein is Coiled-coil domain-containing protein 180 (CCDC180) of Homo sapiens (Human).